Here is a 490-residue protein sequence, read N- to C-terminus: POC1 centriolar protein homolog B (490 aa).

7 WD repeats span residues 16 to 55 (GHKD…RAFR), 58 to 97 (GHTD…ESTV), 100 to 139 (AHTA…FLYS), 142 to 181 (RHTN…CINI), 184 to 223 (DYGG…LIQH), 226 to 265 (VHNA…LIYT), and 268 to 307 (GHKG…LNYR). Residues 375-388 (DGASSSRAQFTSGM) are compositionally biased toward polar residues. The interval 375 to 427 (DGASSSRAQFTSGMDSGPFRTHTQAREEEDENQEERFAGGMTASPAERSGIPS) is disordered. A coiled-coil region spans residues 431-463 (STLENIVQQLDILTQTVAVLEERLTLTEDKLRT).

This sequence belongs to the WD repeat POC1 family.

The protein resides in the cytoplasm. Its subcellular location is the cytoskeleton. It localises to the microtubule organizing center. The protein localises to the centrosome. It is found in the centriole. In terms of biological role, plays an important role in centriole assembly and/or stability and ciliogenesis. Involved in early steps of centriole duplication, as well as in the later steps of centriole length control. The protein is POC1 centriolar protein homolog B of Danio rerio (Zebrafish).